A 1129-amino-acid polypeptide reads, in one-letter code: Phytochrome A type 4 (1129 aa).

Low complexity predominate over residues 1–21 (MSSSRPASSSSSRNRQSSRAR). The segment at 1–24 (MSSSRPASSSSSRNRQSSRARVLA) is disordered. Positions 217-402 (SMEVLCNTVV…VFAVHVNREF (186 aa)) constitute a GAF domain. Residue C322 coordinates phytochromobilin. PAS domains are found at residues 618-688 (VTSE…LQGK) and 748-822 (VEGD…VSLC). The Histidine kinase domain occupies 902–1122 (YMRHAINNPL…TFILTAELAS (221 aa)).

It belongs to the phytochrome family. Homodimer. Contains one covalently linked phytochromobilin chromophore.

Functionally, regulatory photoreceptor which exists in two forms that are reversibly interconvertible by light: the Pr form that absorbs maximally in the red region of the spectrum and the Pfr form that absorbs maximally in the far-red region. Photoconversion of Pr to Pfr induces an array of morphogenic responses, whereas reconversion of Pfr to Pr cancels the induction of those responses. Pfr controls the expression of a number of nuclear genes including those encoding the small subunit of ribulose-bisphosphate carboxylase, chlorophyll A/B binding protein, protochlorophyllide reductase, rRNA, etc. It also controls the expression of its own gene(s) in a negative feedback fashion. This chain is Phytochrome A type 4 (PHYA4), found in Avena sativa (Oat).